We begin with the raw amino-acid sequence, 182 residues long: Ribosome-recycling factor (182 aa).

This sequence belongs to the RRF family.

It is found in the cytoplasm. Functionally, responsible for the release of ribosomes from messenger RNA at the termination of protein biosynthesis. May increase the efficiency of translation by recycling ribosomes from one round of translation to another. The polypeptide is Ribosome-recycling factor (Hydrogenobaculum sp. (strain Y04AAS1)).